The following is a 205-amino-acid chain: Glycerol-3-phosphate acyltransferase (205 aa).

Helical transmembrane passes span Ile8–Ala28, Thr57–Ala77, Glu84–Leu104, Val118–Leu138, Ile143–Ser163, and Lys164–Trp184.

The protein belongs to the PlsY family. As to quaternary structure, probably interacts with PlsX.

The protein localises to the cell inner membrane. The enzyme catalyses an acyl phosphate + sn-glycerol 3-phosphate = a 1-acyl-sn-glycero-3-phosphate + phosphate. Its pathway is lipid metabolism; phospholipid metabolism. In terms of biological role, catalyzes the transfer of an acyl group from acyl-phosphate (acyl-PO(4)) to glycerol-3-phosphate (G3P) to form lysophosphatidic acid (LPA). This enzyme utilizes acyl-phosphate as fatty acyl donor, but not acyl-CoA or acyl-ACP. The sequence is that of Glycerol-3-phosphate acyltransferase from Prochlorococcus marinus (strain SARG / CCMP1375 / SS120).